A 347-amino-acid chain; its full sequence is Quinolinate synthase (347 aa).

Residues histidine 47 and serine 68 each contribute to the iminosuccinate site. A [4Fe-4S] cluster-binding site is contributed by cysteine 113. Iminosuccinate-binding positions include 139–141 and serine 156; that span reads YAN. Cysteine 200 contributes to the [4Fe-4S] cluster binding site. Iminosuccinate is bound by residues 226-228 and threonine 243; that span reads HPE. Cysteine 297 contributes to the [4Fe-4S] cluster binding site.

The protein belongs to the quinolinate synthase family. Type 1 subfamily. Requires [4Fe-4S] cluster as cofactor.

It localises to the cytoplasm. The enzyme catalyses iminosuccinate + dihydroxyacetone phosphate = quinolinate + phosphate + 2 H2O + H(+). Its pathway is cofactor biosynthesis; NAD(+) biosynthesis; quinolinate from iminoaspartate: step 1/1. Functionally, catalyzes the condensation of iminoaspartate with dihydroxyacetone phosphate to form quinolinate. This chain is Quinolinate synthase, found in Salmonella enteritidis PT4 (strain P125109).